The sequence spans 465 residues: Siroheme synthase (465 aa).

The interval 1–203 (MDFLPLFHSL…GRPAEAERLL (203 aa)) is precorrin-2 dehydrogenase /sirohydrochlorin ferrochelatase. Residues 22-23 (EV) and 43-44 (PQ) each bind NAD(+). The residue at position 128 (Ser128) is a Phosphoserine. Positions 217-465 (GEVYLVGAGP…AWFEGAREDA (249 aa)) are uroporphyrinogen-III C-methyltransferase. S-adenosyl-L-methionine is bound at residue Pro226. Asp249 functions as the Proton acceptor in the catalytic mechanism. Lys271 functions as the Proton donor in the catalytic mechanism. S-adenosyl-L-methionine is bound by residues 302–304 (GGD), Ile307, 332–333 (TA), Met384, and Gly413.

This sequence in the N-terminal section; belongs to the precorrin-2 dehydrogenase / sirohydrochlorin ferrochelatase family. The protein in the C-terminal section; belongs to the precorrin methyltransferase family.

The enzyme catalyses uroporphyrinogen III + 2 S-adenosyl-L-methionine = precorrin-2 + 2 S-adenosyl-L-homocysteine + H(+). It catalyses the reaction precorrin-2 + NAD(+) = sirohydrochlorin + NADH + 2 H(+). It carries out the reaction siroheme + 2 H(+) = sirohydrochlorin + Fe(2+). Its pathway is cofactor biosynthesis; adenosylcobalamin biosynthesis; precorrin-2 from uroporphyrinogen III: step 1/1. It functions in the pathway cofactor biosynthesis; adenosylcobalamin biosynthesis; sirohydrochlorin from precorrin-2: step 1/1. It participates in porphyrin-containing compound metabolism; siroheme biosynthesis; precorrin-2 from uroporphyrinogen III: step 1/1. The protein operates within porphyrin-containing compound metabolism; siroheme biosynthesis; siroheme from sirohydrochlorin: step 1/1. Its pathway is porphyrin-containing compound metabolism; siroheme biosynthesis; sirohydrochlorin from precorrin-2: step 1/1. Functionally, multifunctional enzyme that catalyzes the SAM-dependent methylations of uroporphyrinogen III at position C-2 and C-7 to form precorrin-2 via precorrin-1. Then it catalyzes the NAD-dependent ring dehydrogenation of precorrin-2 to yield sirohydrochlorin. Finally, it catalyzes the ferrochelation of sirohydrochlorin to yield siroheme. The chain is Siroheme synthase from Pseudomonas aeruginosa (strain UCBPP-PA14).